The following is a 201-amino-acid chain: MKRKNKKFTEIFIAFILGIAIGVLGYSDYGTDLINQFKISHTPPPKIKHYNISQLSRSKVSTCFTPPSGCTKFIADQIDTARESIYMHAYGMSDSLITAALIDAQARGVQVKILLDRSNLKQKFSKLHELQRAKIEVGIDKVPGIAHNKVIIIDKKKVITGSFNFTAAADKRNAENVIVIEDAELADSYLQNWLSRKARNG.

An N-terminal signal peptide occupies residues 1-25 (MKRKNKKFTEIFIAFILGIAIGVLG). A PLD phosphodiesterase domain is found at 142–169 (VPGIAHNKVIIIDKKKVITGSFNFTAAA). Active-site residues include H147, K149, and D154.

Belongs to the phospholipase D family. As to quaternary structure, homodimer.

Its subcellular location is the secreted. It carries out the reaction a 1,2-diacyl-sn-glycero-3-phosphocholine + H2O = a 1,2-diacyl-sn-glycero-3-phosphate + choline + H(+). Its function is as follows. Could be a virulence factor. The sequence is that of Phospholipase D (pld) from Rickettsia bellii (strain RML369-C).